Here is a 748-residue protein sequence, read N- to C-terminus: 5-methyltetrahydropteroyltriglutamate--homocysteine methyltransferase (748 aa).

Lys-111 serves as a coordination point for 5-methyltetrahydropteroyltri-L-glutamate. L-homocysteine-binding positions include 428–430 (IGS) and Glu-478. L-methionine contacts are provided by residues 428–430 (IGS) and Glu-478. Residues 509–510 (RC) and Trp-555 each bind 5-methyltetrahydropteroyltri-L-glutamate. Asp-593 is an L-homocysteine binding site. Position 593 (Asp-593) interacts with L-methionine. Residue Glu-599 coordinates 5-methyltetrahydropteroyltri-L-glutamate. The Zn(2+) site is built by His-635, Cys-637, and Glu-659. Catalysis depends on His-687, which acts as the Proton donor. Zn(2+) is bound at residue Cys-719.

Belongs to the vitamin-B12 independent methionine synthase family. The cofactor is Zn(2+).

The catalysed reaction is 5-methyltetrahydropteroyltri-L-glutamate + L-homocysteine = tetrahydropteroyltri-L-glutamate + L-methionine. The protein operates within amino-acid biosynthesis; L-methionine biosynthesis via de novo pathway; L-methionine from L-homocysteine (MetE route): step 1/1. Catalyzes the transfer of a methyl group from 5-methyltetrahydrofolate to homocysteine resulting in methionine formation. The polypeptide is 5-methyltetrahydropteroyltriglutamate--homocysteine methyltransferase (Herpetosiphon aurantiacus (strain ATCC 23779 / DSM 785 / 114-95)).